The sequence spans 254 residues: Type III pantothenate kinase (254 aa).

22-29 contacts ATP; the sequence is VLGNTHVR. Residues Y89 and 93–96 each bind substrate; that span reads GLDR. The active-site Proton acceptor is the D95. A K(+)-binding site is contributed by D115. T118 is an ATP binding site. T173 contacts substrate.

This sequence belongs to the type III pantothenate kinase family. In terms of assembly, homodimer. It depends on NH4(+) as a cofactor. Requires K(+) as cofactor.

It localises to the cytoplasm. The enzyme catalyses (R)-pantothenate + ATP = (R)-4'-phosphopantothenate + ADP + H(+). Its pathway is cofactor biosynthesis; coenzyme A biosynthesis; CoA from (R)-pantothenate: step 1/5. Its function is as follows. Catalyzes the phosphorylation of pantothenate (Pan), the first step in CoA biosynthesis. The polypeptide is Type III pantothenate kinase (Synechococcus sp. (strain JA-2-3B'a(2-13)) (Cyanobacteria bacterium Yellowstone B-Prime)).